The primary structure comprises 168 residues: Small ribosomal subunit protein uS5c (168 aa).

Positions 17 to 80 constitute an S5 DRBM domain; sequence WSERVIQITR…SDCKKQIIEF (64 aa).

This sequence belongs to the universal ribosomal protein uS5 family. As to quaternary structure, part of the 30S ribosomal subunit. Contacts protein S4.

The protein localises to the plastid. The protein resides in the chloroplast. Its function is as follows. With S4 and S12 plays an important role in translational accuracy. The protein is Small ribosomal subunit protein uS5c (rps5) of Cyanidium caldarium (Red alga).